A 289-amino-acid chain; its full sequence is MYG1 protein TC_0665 (289 aa).

Belongs to the MYG1 family.

The sequence is that of MYG1 protein TC_0665 from Chlamydia muridarum (strain MoPn / Nigg).